Consider the following 515-residue polypeptide: MEDKLILDLCLSALFVVVLSKLVSSAMKPRLNLPPGPWTLPLIGSLHHLVMTKSPQTHRSLRALSEKHGPIMQLWMGEVPAVVVSSPAVAEEVLKHQDLRFADRHLTATTEEVFFGGRDVIFGPYSERWRHLRKICMQELLTAARVRSFQGVREREVARLVRELAADAGAGGDAGVNLNERISKLANDIVMVSSVGGRCSHRDEFLDALEVAKKQITWLSVADLFPSSKLARMVAVAPRKGLASRKRMELVIRRIIQERKDQLMDDSAAGAGEAAAGKDCFLDVLLRLQKEGGTPVPVTDEIIVVLLFDMISGASETSPTVLIWTLAELMRNPRIMAKAQAEVRQAVAGKTTITEDDIVGLSYLKMVIKETLRLHPPAPLLNPRKCRETSQVMGYDIPKGTSVFVNMWAICRDSRYWEDPEEYKPERFENNSVDYKGNNFEFLPFGSGRRICPGINLGVANLELPLASLLYHFDWKLPNGMAPKDLDMHETSGMVAAKLITLNICPITHIAPSSA.

A helical membrane pass occupies residues 5–25 (LILDLCLSALFVVVLSKLVSS). Residue Cys452 coordinates heme.

Belongs to the cytochrome P450 family. Heme is required as a cofactor.

It is found in the membrane. It catalyses the reaction ent-isokaurene + 2 reduced [NADPH--hemoprotein reductase] + 2 O2 = ent-isokaurene-2beta,3beta-diol + 2 oxidized [NADPH--hemoprotein reductase] + 2 H2O + 2 H(+). Its function is as follows. Enzyme of the diterpenoid metabolism involved in the biosynthesis of antibacterial oryzalides such as phytocassane. In Oryza sativa subsp. japonica (Rice), this protein is Ent-isokaurene C2/C3-hydroxylase (CYP71Z6).